The sequence spans 266 residues: Chymotrypsin-like elastase family member 1 (266 aa).

Positions 1–16 (MLRFLVLATLVLYGHS) are cleaved as a signal peptide. A propeptide spans 17–26 (TRDFPETNAR) (activation peptide). The 238-residue stretch at 27-264 (VVGGTEARKN…YISWINNVIA (238 aa)) folds into the Peptidase S1 domain. An intrachain disulfide couples C56 to C72. The active-site Charge relay system is the H71. The Ca(2+) site is built by E85, N87, Q90, and E95. Residue N87 is glycosylated (N-linked (GlcNAc...) asparagine). D119 (charge relay system) is an active-site residue. Cystine bridges form between C153-C220, C184-C200, and C210-C240. The active-site Charge relay system is S214. N241 carries N-linked (GlcNAc...) asparagine glycosylation.

The protein belongs to the peptidase S1 family. Elastase subfamily. Ca(2+) is required as a cofactor.

Its subcellular location is the secreted. It carries out the reaction Hydrolysis of proteins, including elastin. Preferential cleavage: Ala-|-Xaa.. Serine proteases that hydrolyze many proteins in addition to elastin. This Felis catus (Cat) protein is Chymotrypsin-like elastase family member 1 (CELA1).